Here is a 247-residue protein sequence, read N- to C-terminus: ATP synthase subunit a, chloroplastic (247 aa).

The next 5 helical transmembrane spans lie at 38–58 (QVLI…IIAV), 95–115 (VPFI…GALL), 134–154 (INTT…AGLS), 199–219 (LVVV…VMFL), and 220–240 (GLFT…AYIG).

Belongs to the ATPase A chain family. As to quaternary structure, F-type ATPases have 2 components, CF(1) - the catalytic core - and CF(0) - the membrane proton channel. CF(1) has five subunits: alpha(3), beta(3), gamma(1), delta(1), epsilon(1). CF(0) has four main subunits: a, b, b' and c.

The protein localises to the plastid. The protein resides in the chloroplast thylakoid membrane. In terms of biological role, key component of the proton channel; it plays a direct role in the translocation of protons across the membrane. This Oryza sativa subsp. indica (Rice) protein is ATP synthase subunit a, chloroplastic.